Consider the following 215-residue polypeptide: Cytochrome b6 (215 aa).

The helical transmembrane segment at 32–52 (IFYCLGGITLTCFLVQVATGF) threads the bilayer. A heme c-binding site is contributed by cysteine 35. Heme b-binding residues include histidine 86 and histidine 100. The next 3 membrane-spanning stretches (helical) occupy residues 90–110 (ASMMVLMMILHVFRVYLTGGF), 116–136 (LTWVTGVVLAVLTASFGVTGY), and 186–206 (LHTFVLPLLTAVFMLMHFPMI). Residues histidine 187 and histidine 202 each contribute to the heme b site.

It belongs to the cytochrome b family. PetB subfamily. As to quaternary structure, the 4 large subunits of the cytochrome b6-f complex are cytochrome b6, subunit IV (17 kDa polypeptide, PetD), cytochrome f and the Rieske protein, while the 4 small subunits are PetG, PetL, PetM and PetN. The complex functions as a dimer. The cofactor is heme b. Requires heme c as cofactor.

The protein localises to the plastid. The protein resides in the chloroplast thylakoid membrane. Component of the cytochrome b6-f complex, which mediates electron transfer between photosystem II (PSII) and photosystem I (PSI), cyclic electron flow around PSI, and state transitions. This is Cytochrome b6 from Phalaenopsis aphrodite subsp. formosana (Moth orchid).